The chain runs to 179 residues: Large ribosomal subunit protein uL5 (179 aa).

Belongs to the universal ribosomal protein uL5 family. In terms of assembly, part of the 50S ribosomal subunit; part of the 5S rRNA/L5/L18/L25 subcomplex. Contacts the 5S rRNA and the P site tRNA. Forms a bridge to the 30S subunit in the 70S ribosome.

This is one of the proteins that bind and probably mediate the attachment of the 5S RNA into the large ribosomal subunit, where it forms part of the central protuberance. In the 70S ribosome it contacts protein S13 of the 30S subunit (bridge B1b), connecting the 2 subunits; this bridge is implicated in subunit movement. Contacts the P site tRNA; the 5S rRNA and some of its associated proteins might help stabilize positioning of ribosome-bound tRNAs. This is Large ribosomal subunit protein uL5 from Parasynechococcus marenigrum (strain WH8102).